Here is a 435-residue protein sequence, read N- to C-terminus: Plant UBX domain-containing protein 6 (435 aa).

Disordered regions lie at residues 1 to 150 (MDVN…PQKV), 208 to 265 (ENYT…EDQP), and 311 to 352 (PTTT…SMSS). Over residues 49–62 (TSSFSTFDGSSGYS) the composition is skewed to low complexity. Over residues 112–129 (AVEHYGGEENRAIERPEQ) the composition is skewed to basic and acidic residues. A compositionally biased stretch (low complexity) spans 130–141 (SSRSMSEETVSS). In terms of domain architecture, SEP 1 spans 150-211 (VFTHTVTSWS…IISREEENYT (62 aa)). Positions 211–222 (TESQAGSDSAST) are enriched in polar residues. Basic and acidic residues predominate over residues 231 to 242 (RAKESAIERSEQ). Positions 252 to 265 (DSAELQEQQQEDQP) are enriched in acidic residues. In terms of domain architecture, SEP 2 spans 268–343 (VVTYTVTIWR…ESTSTEPPLT (76 aa)). Low complexity-rich tracts occupy residues 312–323 (TTTRSTSCSSQT) and 333–349 (SEST…QPPS). The UBX domain occupies 357–434 (PAAPTTSIQL…GIANSVLVQK (78 aa)).

This Arabidopsis thaliana (Mouse-ear cress) protein is Plant UBX domain-containing protein 6.